The following is a 394-amino-acid chain: GPI transamidase component GAB1 (394 aa).

At M1–S135 the chain is on the cytoplasmic side. The helical transmembrane segment at I136–V156 threads the bilayer. The Lumenal segment spans residues L157 to S160. Residues V161–L181 form a helical membrane-spanning segment. Residues G182–R190 are Cytoplasmic-facing. The helical transmembrane segment at I191–I211 threads the bilayer. Topologically, residues L212–Y224 are lumenal. A helical transmembrane segment spans residues G225–I245. The segment at P235–F255 is may be involved in recognition of long-chain fatty acids in GPI. The Cytoplasmic portion of the chain corresponds to E246–T250. A helical transmembrane segment spans residues F251 to T271. Residues L272–S297 are Lumenal-facing. A helical membrane pass occupies residues L298 to L318. The Cytoplasmic portion of the chain corresponds to R319–S324. Residues A325–L345 traverse the membrane as a helical segment. Residues G346–N351 are Lumenal-facing. The helical transmembrane segment at F352–N372 threads the bilayer. Residues W373–I394 are Cytoplasmic-facing.

It belongs to the PIGU family. In terms of assembly, forms a complex with GPI16, GPI17, GPI8 and GAA1.

It localises to the endoplasmic reticulum membrane. The protein operates within glycolipid biosynthesis; glycosylphosphatidylinositol-anchor biosynthesis. Its function is as follows. Component of the GPI transamidase complex. May be involved in the recognition of either the GPI attachment signal or the lipid portion of GPI. This is GPI transamidase component GAB1 (GAB1) from Saccharomyces cerevisiae (strain ATCC 204508 / S288c) (Baker's yeast).